Consider the following 243-residue polypeptide: Entry-fusion complex associated protein OPG095 (243 aa).

Glycine 2 is lipidated: N-myristoyl glycine; by host. The segment at 2–12 (GAAASIQTTVT) is targeting to MV membrane. Residues 2–183 (GAAASIQTTV…VSGNQSTGND (182 aa)) are Virion surface-facing. 3 disulfides stabilise this stretch: cysteine 34/cysteine 57, cysteine 49/cysteine 136, and cysteine 116/cysteine 158. Residues 184 to 204 (FSKYLYIIGGIICFLILLYYA) traverse the membrane as a helical segment. Topologically, residues 205–243 (KKLFFMSTNDKVKVLLAKKPDVHWTTYIDTYFRSSPVLV) are intravirion.

This sequence belongs to the orthopoxvirus OPG095 family. As to quaternary structure, component of the entry fusion complex (EFC) composed of OPG053, OPG076, OPG086, OPG094, OPG095, OPG099, OPG107, OPG143, OPG104, OPG147 and OPG155. Except for OPG095 and OPG053, each of the EFC proteins is required for assembly or stability of the complex. Myristoylated. Post-translationally, disulfid bonds are oxidized in the cytoplasm by OPG088 protein. In terms of processing, unglycosylated because produced in viral factories instead of the classic ER -Golgi route.

It is found in the virion membrane. In terms of biological role, component of the entry fusion complex (EFC), which consists of 11 proteins. During cell infection, this complex mediates entry of the virion core into the host cytoplasm by a two-step mechanism consisting of lipid mixing of the viral and cellular membranes and subsequent pore formation. This is Entry-fusion complex associated protein OPG095 (OPG099) from Vertebrata (FPV).